The sequence spans 375 residues: Platelet-derived growth factor receptor-like protein (375 aa).

Residues 1-21 (MKIWLLLGLLLMHEALEDVTG) form the signal peptide. A disordered region spans residues 20–64 (TGQHPPKNKRPKEPGENRIKPTNKKVKPKIPKIKDRDSADPTPKT). Basic residues predominate over residues 40 to 50 (PTNKKVKPKIP). An Ig-like C2-type 1 domain is found at 62 to 159 (PKTQSIMTQM…GYVCRRDEAK (98 aa)). Residues Cys96 and Cys143 are joined by a disulfide bond. N-linked (GlcNAc...) asparagine glycosylation is found at Asn132 and Asn219. Residues 272 to 373 (PSTTILASSN…GQTTVATTVE (102 aa)) form the Ig-like C2-type 2 domain. A disulfide bridge links Cys293 with Cys357.

Forms a complex composed of PDGFRL, TNK2 and GRB2.

It localises to the secreted. In Bos taurus (Bovine), this protein is Platelet-derived growth factor receptor-like protein (PDGFRL).